Consider the following 153-residue polypeptide: Putative riboflavin kinase (153 aa).

2 residues coordinate Mg(2+): T28 and N30. Catalysis depends on E80, which acts as the Nucleophile.

In terms of assembly, monomer. Zn(2+) is required as a cofactor. Mg(2+) serves as cofactor.

Its subcellular location is the cytoplasm. It carries out the reaction riboflavin + ATP = FMN + ADP + H(+). It participates in cofactor biosynthesis; FMN biosynthesis; FMN from riboflavin (ATP route): step 1/1. Catalyzes the phosphorylation of riboflavin (vitamin B2) to form flavin-mononucleotide (FMN). This chain is Putative riboflavin kinase, found in Drosophila melanogaster (Fruit fly).